A 170-amino-acid polypeptide reads, in one-letter code: Translationally-controlled tumor protein homolog (170 aa).

Residues 1-170 (MLIYSDIITG…WKHGLKETKV (170 aa)) form the TCTP domain.

The protein belongs to the TCTP family.

It localises to the cytoplasm. It is found in the cytoskeleton. Involved in protein synthesis. Involved in microtubule stabilization. The sequence is that of Translationally-controlled tumor protein homolog from Neurospora crassa (strain ATCC 24698 / 74-OR23-1A / CBS 708.71 / DSM 1257 / FGSC 987).